A 330-amino-acid chain; its full sequence is Inactive hydroxysteroid dehydrogenase-like protein 1 (330 aa).

At alanine 2 the chain carries N-acetylalanine. The required for mitochondria translocation stretch occupies residues 2 to 82; that stretch reads AAVDSFYLLY…SGATDGIGKA (81 aa). Residues 74-80, aspartate 125, and lysine 222 contribute to the NADP(+) site; that span reads GATDGIG.

The protein belongs to the short-chain dehydrogenases/reductases (SDR) family. 17-beta-HSD 3 subfamily. Interacts with STYXL1. Highly expressed in testis and ovary. Also detected in thyroid, spinal cord, adrenal gland, heart, placenta, skeletal muscle, small intestine, colon, spleen, prostate and pancreas.

It localises to the mitochondrion. The sequence is that of Inactive hydroxysteroid dehydrogenase-like protein 1 (HSDL1) from Homo sapiens (Human).